The primary structure comprises 262 residues: 5'-nucleotidase SurE (262 aa).

The a divalent metal cation site is built by aspartate 8, aspartate 9, serine 41, and asparagine 97.

The protein belongs to the SurE nucleotidase family. The cofactor is a divalent metal cation.

Its subcellular location is the cytoplasm. The catalysed reaction is a ribonucleoside 5'-phosphate + H2O = a ribonucleoside + phosphate. In terms of biological role, nucleotidase that shows phosphatase activity on nucleoside 5'-monophosphates. The protein is 5'-nucleotidase SurE of Methanococcus maripaludis (strain DSM 14266 / JCM 13030 / NBRC 101832 / S2 / LL).